A 396-amino-acid chain; its full sequence is MMFRTLDDANVQSKRVLVRVDLNVPMANGEVTDLTRIERIVPTIAELSRKGAKVILLAHFGRPKGVASDENSLKHVVKPLSKVLDHSVHFAEDCIGDKAKAAVDALKDGDVLLLENTRFHKGEEKNDPEFVQALAANGDLYVNDAFSAAHRAHASTEGLAHVLPAFAGRAMQAELEALEKGLGNPARPVVAIVGGAKVSTKLDLLSNLIEKVDALVIGGGMANTFLAAKGLDVGKSLCEHELASTAREIMAKAETTKCAIILPVDAVVGWHFAADTPHQTYGVDSVPGDAMILDAGELSTDLIASAIDDAATLVWNGPLGAFELRPFDTATVKVARHVAKRTKEGKLVSVGGGGDTVAALNHAGVADDFTYISTAGGAFLEWMEGKPLPGVDVLKK.

Substrate contacts are provided by residues 21–23 (DLN), Arg36, 59–62 (HFGR), Arg118, and Arg151. ATP is bound by residues Lys201, Glu323, and 353-356 (GGDT).

This sequence belongs to the phosphoglycerate kinase family. Monomer.

The protein resides in the cytoplasm. The catalysed reaction is (2R)-3-phosphoglycerate + ATP = (2R)-3-phospho-glyceroyl phosphate + ADP. Its pathway is carbohydrate degradation; glycolysis; pyruvate from D-glyceraldehyde 3-phosphate: step 2/5. The chain is Phosphoglycerate kinase from Brucella abortus biovar 1 (strain 9-941).